The chain runs to 365 residues: Guanine nucleotide-binding protein alpha-6 subunit (365 aa).

Glycine 2 is lipidated: N-myristoyl glycine. The G-alpha domain maps to 42 to 364 (NRFKILLLGT…NENLRSAGLH (323 aa)). Positions 45–58 (KILLLGTAESGKST) are G1 motif. Residues 50–57 (GTAESGKS), 187–193 (VHCRIST), 212–216 (DVGGQ), 281–284 (NKYD), and alanine 336 each bind GTP. Positions 57 and 193 each coordinate Mg(2+). Residues 185 to 193 (DIVHCRIST) are G2 motif. Residues 208 to 217 (FKMVDVGGQR) are G3 motif. Positions 277 to 284 (VLFLNKYD) are G4 motif. The G5 motif stretch occupies residues 334–339 (TTATDT).

It belongs to the G-alpha family. G proteins are composed of 3 units; alpha, beta and gamma. The alpha chain contains the guanine nucleotide binding site.

Guanine nucleotide-binding proteins (G proteins) are involved as modulators or transducers in various transmembrane signaling systems. This chain is Guanine nucleotide-binding protein alpha-6 subunit (gpa-6), found in Caenorhabditis briggsae.